Reading from the N-terminus, the 56-residue chain is Large ribosomal subunit protein bL32c (56 aa).

It belongs to the bacterial ribosomal protein bL32 family.

The protein localises to the plastid. Its subcellular location is the chloroplast. The polypeptide is Large ribosomal subunit protein bL32c (Platanus occidentalis (Sycamore)).